The following is a 139-amino-acid chain: Small ribosomal subunit protein bS6 (139 aa).

Belongs to the bacterial ribosomal protein bS6 family.

In terms of biological role, binds together with bS18 to 16S ribosomal RNA. The protein is Small ribosomal subunit protein bS6 of Borreliella afzelii (strain PKo) (Borrelia afzelii).